The sequence spans 1328 residues: ABC transporter G family member 2 (1328 aa).

One can recognise an ABC transporter 1 domain in the interval 53 to 299 (VTARNLSMSI…FEGLGFKLPK (247 aa)). 91-98 (GSPGCGKT) lines the ATP pocket. Residues 388-665 (ISSQVAVRMR…FGMYFFLKNV (278 aa)) form the ABC transmembrane type-2 1 domain. A run of 7 helical transmembrane segments spans residues 398–418 (IIKSIVMGLILGSLFYGLDLN), 428–448 (LIFFSLLFIVFSGMGAIAILF), 477–497 (IPIALLETVVFCVLVYWMCGL), 504–524 (FIYFLLMNFVGDLAFQSFFKM), 534–554 (LASVIAPAALAPFILFSGFMA), 559–579 (IGGWWIWIYWISPIKYAFEGL), and 642–662 (IDLLIVFAFGALFSFGMYFFL). The tract at residues 670 to 691 (RASDPKNDKRSKKASKRSKKIK) is disordered. The span at 678-689 (KRSKKASKRSKK) shows a compositional bias: basic residues. The 240-residue stretch at 721-960 (VYEVDVKKDG…DLLGYFENHG (240 aa)) folds into the ABC transporter 2 domain. 755–762 (GPSGAGKS) lines the ATP pocket. The 238-residue stretch at 1049–1286 (VRRVQNIRTR…PICPITNGNQ (238 aa)) folds into the ABC transmembrane type-2 2 domain. 6 helical membrane passes run 1059–1076 (LMRSLFLGVVLGTLFVRM), 1087–1107 (VSILFFSLMFGGMSGMSSIPI), 1128–1148 (IYLFTFIVTDLPWVFLSAIIY), 1172–1192 (FISFTTYFNFSMLAMVFATVL), 1197–1217 (IAHALGGVALSISSLFAGFMI), and 1303–1323 (AVIFGYSVFFFICIFIALKFI).

This sequence belongs to the ABC transporter superfamily. ABCG family. PDR (TC 3.A.1.205) subfamily.

The protein localises to the endosome membrane. Required for endocytosis and endosomal pH regulation. This Dictyostelium discoideum (Social amoeba) protein is ABC transporter G family member 2 (abcG2).